The primary structure comprises 506 residues: Aminoaldehyde dehydrogenase 1b (506 aa).

Na(+) is bound at residue Asp102. NAD(+)-binding positions include 162–164 (TPW) and 188–191 (KPSE). Na(+) is bound at residue Leu192. NAD(+) is bound by residues 242–245 (SFET) and Glu263. Catalysis depends on Glu263, which acts as the Proton acceptor. The Nucleophile role is filled by Cys297. Residues Glu396 and Trp462 each contribute to the NAD(+) site.

The protein belongs to the aldehyde dehydrogenase family.

It catalyses the reaction 4-aminobutanal + NAD(+) + H2O = 4-aminobutanoate + NADH + 2 H(+). It carries out the reaction 3-aminopropanal + NAD(+) + H2O = beta-alanine + NADH + 2 H(+). The enzyme catalyses 4-(trimethylamino)butanal + NAD(+) + H2O = 4-(trimethylamino)butanoate + NADH + 2 H(+). The catalysed reaction is 4-guanidinobutanal + NAD(+) + H2O = 4-guanidinobutanoate + NADH + 2 H(+). It catalyses the reaction betaine aldehyde + NAD(+) + H2O = glycine betaine + NADH + 2 H(+). It participates in amine and polyamine biosynthesis; betaine biosynthesis via choline pathway; betaine from betaine aldehyde: step 1/1. Dehydrogenase that catalyzes the oxidation of several aminoaldehydes. Metabolizes and detoxifies aldehyde products of polyamine degradation to non-toxic amino acids. Catalyzes the oxidation of 4-aminobutanal and 3-aminopropanal to 4-aminobutanoate and beta-alanine, respectively. Catalyzes the oxidation of 4-(trimethylamino)butanal and 4-guanidinobutanal to 4-trimethylammoniobutanoate and 4-guanidinobutanoate, respectively. Catalyzes the oxidation of betaine aldehyde to glycine betaine. This chain is Aminoaldehyde dehydrogenase 1b, found in Zea mays (Maize).